The following is a 681-amino-acid chain: Protein NirI (681 aa).

Positions 1 to 30 (MAMPGKSSHAPSRLLLALLTLILLALPARP) are cleaved as a signal peptide. The next 5 helical transmembrane spans lie at 394–414 (IPGIAVVAAMLFVLALILFGQ), 436–456 (LVVLGWGLNGQLSVVQVVAFL), 468–488 (FLIEPIIFLIWSAVALGLLFW), 535–555 (TLFVAIVALSFYSMEQALILA), and 568–588 (FLRAWPFVLFALAVLAGGLFI).

To P.stutzeri NosR.

It is found in the cell membrane. This is Protein NirI (nirI) from Paracoccus denitrificans (strain Pd 1222).